The following is a 209-amino-acid chain: Orotate phosphoribosyltransferase (209 aa).

5-phospho-alpha-D-ribose 1-diphosphate-binding positions include R96, K100, H102, and 122-130 (EDLISTGGS). Residue S126 participates in orotate binding.

This sequence belongs to the purine/pyrimidine phosphoribosyltransferase family. PyrE subfamily. In terms of assembly, homodimer. It depends on Mg(2+) as a cofactor.

It carries out the reaction orotidine 5'-phosphate + diphosphate = orotate + 5-phospho-alpha-D-ribose 1-diphosphate. It functions in the pathway pyrimidine metabolism; UMP biosynthesis via de novo pathway; UMP from orotate: step 1/2. Catalyzes the transfer of a ribosyl phosphate group from 5-phosphoribose 1-diphosphate to orotate, leading to the formation of orotidine monophosphate (OMP). The sequence is that of Orotate phosphoribosyltransferase from Listeria monocytogenes serovar 1/2a (strain ATCC BAA-679 / EGD-e).